Reading from the N-terminus, the 202-residue chain is DNA polymerase III subunit epsilon (202 aa).

Residues aspartate 23 and glutamate 25 each contribute to the a divalent metal cation site. 2 residues coordinate substrate: aspartate 23 and glutamate 25. Residue histidine 162 is the Proton acceptor of the active site. Aspartate 167 contributes to the a divalent metal cation binding site. A substrate-binding site is contributed by aspartate 167.

As to quaternary structure, DNA polymerase III contains a core (composed of alpha, epsilon and theta chains) that associates with a tau subunit. This core dimerizes to form the POLIII' complex. PolIII' associates with the gamma complex (composed of gamma, delta, delta', psi and chi chains) and with the beta chain to form the complete DNA polymerase III complex. Requires Mg(2+) as cofactor. It depends on Mn(2+) as a cofactor.

It catalyses the reaction DNA(n) + a 2'-deoxyribonucleoside 5'-triphosphate = DNA(n+1) + diphosphate. Functionally, DNA polymerase III is a complex, multichain enzyme responsible for most of the replicative synthesis in bacteria. The epsilon subunit contain the editing function and is a proofreading 3'-5' exonuclease. The chain is DNA polymerase III subunit epsilon (dnaQ) from Aquifex aeolicus (strain VF5).